The following is an 87-amino-acid chain: Large ribosomal subunit protein bL31B (87 aa).

Belongs to the bacterial ribosomal protein bL31 family. Type B subfamily. Part of the 50S ribosomal subunit.

The sequence is that of Large ribosomal subunit protein bL31B from Burkholderia thailandensis (strain ATCC 700388 / DSM 13276 / CCUG 48851 / CIP 106301 / E264).